Here is a 300-residue protein sequence, read N- to C-terminus: Acetylglutamate kinase (300 aa).

Substrate contacts are provided by residues 68-69, Arg90, and Asn195; that span reads GG.

Belongs to the acetylglutamate kinase family. ArgB subfamily.

The protein localises to the cytoplasm. The enzyme catalyses N-acetyl-L-glutamate + ATP = N-acetyl-L-glutamyl 5-phosphate + ADP. The protein operates within amino-acid biosynthesis; L-arginine biosynthesis; N(2)-acetyl-L-ornithine from L-glutamate: step 2/4. Catalyzes the ATP-dependent phosphorylation of N-acetyl-L-glutamate. The polypeptide is Acetylglutamate kinase (Azotobacter vinelandii (strain DJ / ATCC BAA-1303)).